The sequence spans 251 residues: tRNA (guanine-N(1)-)-methyltransferase (251 aa).

S-adenosyl-L-methionine contacts are provided by residues Gly-117 and 137-142; that span reads IGDYVL.

Belongs to the RNA methyltransferase TrmD family. As to quaternary structure, homodimer.

It localises to the cytoplasm. It carries out the reaction guanosine(37) in tRNA + S-adenosyl-L-methionine = N(1)-methylguanosine(37) in tRNA + S-adenosyl-L-homocysteine + H(+). In terms of biological role, specifically methylates guanosine-37 in various tRNAs. This is tRNA (guanine-N(1)-)-methyltransferase from Actinobacillus pleuropneumoniae serotype 5b (strain L20).